The following is a 362-amino-acid chain: Probable dual-specificity RNA methyltransferase RlmN (362 aa).

The active-site Proton acceptor is the E91. The region spanning 97–329 (QHYGLSVCVT…KKNGVNCVVR (233 aa)) is the Radical SAM core domain. A disulfide bond links C104 and C340. 3 residues coordinate [4Fe-4S] cluster: C111, C115, and C118. Residues 163–164 (GE), S195, 218–220 (SLH), and N296 each bind S-adenosyl-L-methionine. Catalysis depends on C340, which acts as the S-methylcysteine intermediate.

It belongs to the radical SAM superfamily. RlmN family. The cofactor is [4Fe-4S] cluster.

The protein localises to the cytoplasm. The catalysed reaction is adenosine(2503) in 23S rRNA + 2 reduced [2Fe-2S]-[ferredoxin] + 2 S-adenosyl-L-methionine = 2-methyladenosine(2503) in 23S rRNA + 5'-deoxyadenosine + L-methionine + 2 oxidized [2Fe-2S]-[ferredoxin] + S-adenosyl-L-homocysteine. The enzyme catalyses adenosine(37) in tRNA + 2 reduced [2Fe-2S]-[ferredoxin] + 2 S-adenosyl-L-methionine = 2-methyladenosine(37) in tRNA + 5'-deoxyadenosine + L-methionine + 2 oxidized [2Fe-2S]-[ferredoxin] + S-adenosyl-L-homocysteine. Its function is as follows. Specifically methylates position 2 of adenine 2503 in 23S rRNA and position 2 of adenine 37 in tRNAs. The protein is Probable dual-specificity RNA methyltransferase RlmN of Streptococcus gordonii (strain Challis / ATCC 35105 / BCRC 15272 / CH1 / DL1 / V288).